A 352-amino-acid chain; its full sequence is Rhodopsin, freshwater form (352 aa).

Over 1 to 36 the chain is Extracellular; the sequence is MNGTEGPNFYVPMSNVTGVVRSPFEYPQYYLAEPWA. Residues asparagine 2 and asparagine 15 are each glycosylated (N-linked (GlcNAc...) asparagine). Residues 37-61 form a helical membrane-spanning segment; that stretch reads YSALAAYMFFLIIAGFPINFLTLYV. Residues 62–73 are Cytoplasmic-facing; sequence TIEHKKLRTPLN. A helical transmembrane segment spans residues 74 to 98; that stretch reads YILLNLAVADLFMVFGGFTTTMYTS. The Extracellular segment spans residues 99 to 113; the sequence is MHGYFVFGPTGCNIE. A disulfide bridge connects residues cysteine 110 and cysteine 187. A helical transmembrane segment spans residues 114 to 133; that stretch reads GFFATLGGEIALWCLVVLAV. The Cytoplasmic portion of the chain corresponds to 134-152; it reads ERWMVVCKPMSNFRFGENH. The helical transmembrane segment at 153 to 176 threads the bilayer; it reads AIMGVAFTWVMALACAAPPLFGWS. Topologically, residues 177–202 are extracellular; sequence RYIPEGMQCSCGMDHYAPNPETYNES. N-linked (GlcNAc...) asparagine glycosylation occurs at asparagine 200. The chain crosses the membrane as a helical span at residues 203–230; that stretch reads FVIYMFICHFTIPLTVISFCYGRLVCTV. The Cytoplasmic segment spans residues 231–252; sequence KEATAQQQESETTQRAEREVTR. A helical membrane pass occupies residues 253–276; that stretch reads MVIIMVISFLVCWVPYASVAWYIF. Residues 277 to 284 lie on the Extracellular side of the membrane; the sequence is THQGSSFG. The chain crosses the membrane as a helical span at residues 285–309; that stretch reads PIFMTIPAFFAKSSSLYNPLIYICM. The residue at position 296 (lysine 296) is an N6-(retinylidene)lysine. The Cytoplasmic portion of the chain corresponds to 310 to 352; that stretch reads NKQSRNCMITTLCCGKNPFEEEEGASTTASKTEASSVSSVSPA. Cysteine 323 carries S-palmitoyl cysteine lipidation. Residues 330–352 form a disordered region; that stretch reads EEEGASTTASKTEASSVSSVSPA. A compositionally biased stretch (low complexity) spans 334 to 352; the sequence is ASTTASKTEASSVSSVSPA.

It belongs to the G-protein coupled receptor 1 family. Opsin subfamily. Phosphorylated on some or all of the serine and threonine residues present in the C-terminal region. In terms of tissue distribution, rod shaped photoreceptor cells which mediates vision in dim light.

The protein resides in the membrane. Functionally, visual pigments such as rhodopsin and porphyropsin are light-absorbing molecules that mediate vision. Rhodopsin consists of an apoprotein, opsin, covalently linked to 11-cis-retinal. This receptor is coupled to the activation of phospholipase C. Porphyropsin consists of opsin covalently linked to 11-cis 3,4-didehydroretinal. This Anguilla anguilla (European freshwater eel) protein is Rhodopsin, freshwater form.